Consider the following 403-residue polypeptide: MAPVGAKKGLLERLDAGEVVIGDGGFVFALEKRGYVKAGPWTPEAAVEHPEAVRQLHREFLRAGANVMQTFTFYASDDKLENRGNYVAEKISGQKVNEVACDIAREVANEGDALVAGGVSQTPSYLSCKSEVEVKGIFRKQLDVFIKKNVDFLIAEYFEHVEEAVWAVEVLKESGKPVAATLCIGPEGDLNGVSPGECAVRLAKAGASVVGVNCHFDPMTCVATVKLMKEGLVAAKVKAHLMTQPLAYHTPDCGKQGFIDLPEFPFALEPRIVTRWDIHKYARAAYDLGVRYIGGCCGFEPYHTRAIAEELAPERGFLPKGSEKHGSWGSGLEMHTKPWVRARARRDYWEKLPPASGRPYCPSMSKPDEWGVTKGDADLMQQKEATTEQQLKDLIAKQGIKSN.

One can recognise a Hcy-binding domain in the interval 8–311 (KGLLERLDAG…YHTRAIAEEL (304 aa)). Positions 214, 296, and 297 each coordinate Zn(2+).

Homotetramer. Zn(2+) is required as a cofactor.

It is found in the cytoplasm. It catalyses the reaction L-homocysteine + glycine betaine = N,N-dimethylglycine + L-methionine. The protein operates within amine and polyamine degradation; betaine degradation; sarcosine from betaine: step 1/2. It functions in the pathway amino-acid biosynthesis; L-methionine biosynthesis via de novo pathway; L-methionine from L-homocysteine (BhmT route): step 1/1. Involved in the regulation of homocysteine metabolism. Converts betaine and homocysteine to dimethylglycine and methionine, respectively. This reaction is also required for the irreversible oxidation of choline. This chain is Betaine--homocysteine S-methyltransferase 1 (bhmt), found in Xenopus laevis (African clawed frog).